A 236-amino-acid chain; its full sequence is (5-formylfuran-3-yl)methyl phosphate synthase (236 aa).

Catalysis depends on Lys-27, which acts as the Schiff-base intermediate with substrate. The active-site Proton acceptor is the Lys-85.

This sequence belongs to the MfnB family.

It carries out the reaction 2 D-glyceraldehyde 3-phosphate = 4-(hydroxymethyl)-2-furancarboxaldehyde phosphate + phosphate + 2 H2O. It participates in cofactor biosynthesis; methanofuran biosynthesis. In terms of biological role, catalyzes the formation of 4-(hydroxymethyl)-2-furancarboxaldehyde phosphate (4-HFC-P) from two molecules of glyceraldehyde-3-P (GA-3-P). This Methanococcus maripaludis (strain C7 / ATCC BAA-1331) protein is (5-formylfuran-3-yl)methyl phosphate synthase.